We begin with the raw amino-acid sequence, 154 residues long: MYKIQLLSCIALTLILVTNSAPASSSTKETQQQLEQLLLDLRLLLNGVNNPENPKLSRMLTFKFYVPKKATELTHLQCLVEELKPLEEVLYLAQSKNFHLNHIKELMSNINVTVLKLKGSETRFTCNYDDETATIVEFLNKWITFCQSIFSTLT.

Positions 1-20 (MYKIQLLSCIALTLILVTNS) are cleaved as a signal peptide. Residues C78 and C126 are joined by a disulfide bond. N-linked (GlcNAc...) asparagine glycosylation is present at N111.

Belongs to the IL-2 family.

Its subcellular location is the secreted. Cytokine produced by activated CD4-positive helper T-cells and to a lesser extend activated CD8-positive T-cells and natural killer (NK) cells that plays pivotal roles in the immune response and tolerance. Binds to a receptor complex composed of either the high-affinity trimeric IL-2R (IL2RA/CD25, IL2RB/CD122 and IL2RG/CD132) or the low-affinity dimeric IL-2R (IL2RB and IL2RG). Interaction with the receptor leads to oligomerization and conformation changes in the IL-2R subunits resulting in downstream signaling starting with phosphorylation of JAK1 and JAK3. In turn, JAK1 and JAK3 phosphorylate the receptor to form a docking site leading to the phosphorylation of several substrates including STAT5. This process leads to activation of several pathways including STAT, phosphoinositide-3-kinase/PI3K and mitogen-activated protein kinase/MAPK pathways. Functions as a T-cell growth factor and can increase NK-cell cytolytic activity as well. Promotes strong proliferation of activated B-cells and subsequently immunoglobulin production. Plays a pivotal role in regulating the adaptive immune system by controlling the survival and proliferation of regulatory T-cells, which are required for the maintenance of immune tolerance. Moreover, participates in the differentiation and homeostasis of effector T-cell subsets, including Th1, Th2, Th17 as well as memory CD8-positive T-cells. This chain is Interleukin-2 (IL2), found in Felis catus (Cat).